We begin with the raw amino-acid sequence, 277 residues long: Uridine-cytidine kinase 1 (277 aa).

Positions 1 to 30 (MASAGGGGSESAAPEADRPQPRPFLIGVSG) are disordered. Residue 30-38 (GGTASGKST) coordinates ATP. Asp87, Tyr115, His120, Arg169, Arg178, and Gln186 together coordinate substrate. Position 215 (Asp215) interacts with ATP. A compositionally biased stretch (basic residues) spans 238–250 (RHRGGPNGRNHKR). The tract at residues 238 to 277 (RHRGGPNGRNHKRTFPEPGDHPGVLATGKRSHLESSSRPH) is disordered. Thr251 carries the phosphothreonine modification. Residues 268 to 277 (SHLESSSRPH) show a composition bias toward basic and acidic residues.

The protein belongs to the uridine kinase family.

It catalyses the reaction uridine + ATP = UMP + ADP + H(+). The enzyme catalyses cytidine + ATP = CMP + ADP + H(+). Its pathway is pyrimidine metabolism; CTP biosynthesis via salvage pathway; CTP from cytidine: step 1/3. It participates in pyrimidine metabolism; UMP biosynthesis via salvage pathway; UMP from uridine: step 1/1. In terms of biological role, phosphorylates uridine and cytidine to uridine monophosphate and cytidine monophosphate. Does not phosphorylate deoxyribonucleosides or purine ribonucleosides. Can use ATP or GTP as a phosphate donor. The protein is Uridine-cytidine kinase 1 (Uck1) of Mus musculus (Mouse).